We begin with the raw amino-acid sequence, 482 residues long: tRNA sulfurtransferase (482 aa).

The 105-residue stretch at 61 to 165 folds into the THUMP domain; the sequence is LAIRDALTRI…DDRLLLIKGR (105 aa). ATP contacts are provided by residues 183-184, Lys265, Gly287, and Gln296; that span reads LI. Cys344 and Cys456 form a disulfide bridge. In terms of domain architecture, Rhodanese spans 404-482; the sequence is FGPNDVILDI…GFNNVKVYRP (79 aa). Residue Cys456 is the Cysteine persulfide intermediate of the active site.

Belongs to the ThiI family.

It localises to the cytoplasm. The enzyme catalyses [ThiI sulfur-carrier protein]-S-sulfanyl-L-cysteine + a uridine in tRNA + 2 reduced [2Fe-2S]-[ferredoxin] + ATP + H(+) = [ThiI sulfur-carrier protein]-L-cysteine + a 4-thiouridine in tRNA + 2 oxidized [2Fe-2S]-[ferredoxin] + AMP + diphosphate. The catalysed reaction is [ThiS sulfur-carrier protein]-C-terminal Gly-Gly-AMP + S-sulfanyl-L-cysteinyl-[cysteine desulfurase] + AH2 = [ThiS sulfur-carrier protein]-C-terminal-Gly-aminoethanethioate + L-cysteinyl-[cysteine desulfurase] + A + AMP + 2 H(+). Its pathway is cofactor biosynthesis; thiamine diphosphate biosynthesis. Its function is as follows. Catalyzes the ATP-dependent transfer of a sulfur to tRNA to produce 4-thiouridine in position 8 of tRNAs, which functions as a near-UV photosensor. Also catalyzes the transfer of sulfur to the sulfur carrier protein ThiS, forming ThiS-thiocarboxylate. This is a step in the synthesis of thiazole, in the thiamine biosynthesis pathway. The sulfur is donated as persulfide by IscS. This Escherichia coli O45:K1 (strain S88 / ExPEC) protein is tRNA sulfurtransferase.